The sequence spans 366 residues: Holliday junction branch migration complex subunit RuvB (366 aa).

Residues 1-48 (MIDRLMAREAIYQQSNPDPGGDPPEDGPPHGKNAADGGDEPDRGPDPD) form a disordered region. The interval 21–212 (GDPPEDGPPH…FQIREHLGWY (192 aa)) is large ATPase domain (RuvB-L). ATP contacts are provided by residues Leu51, Arg52, Gly93, Lys96, Thr97, Thr98, 159–161 (EDF), Arg202, Tyr212, and Arg249. Thr97 contributes to the Mg(2+) binding site. The interval 213 to 283 (TRKELAEIVL…VCEAALDMIG (71 aa)) is small ATPAse domain (RuvB-S). Residues 286–366 (HLGLDKQDRN…KRQMPDRPLS (81 aa)) are head domain (RuvB-H). Arg341, Arg343, and Arg346 together coordinate DNA.

It belongs to the RuvB family. In terms of assembly, homohexamer. Forms an RuvA(8)-RuvB(12)-Holliday junction (HJ) complex. HJ DNA is sandwiched between 2 RuvA tetramers; dsDNA enters through RuvA and exits via RuvB. An RuvB hexamer assembles on each DNA strand where it exits the tetramer. Each RuvB hexamer is contacted by two RuvA subunits (via domain III) on 2 adjacent RuvB subunits; this complex drives branch migration. In the full resolvosome a probable DNA-RuvA(4)-RuvB(12)-RuvC(2) complex forms which resolves the HJ.

It localises to the cytoplasm. The enzyme catalyses ATP + H2O = ADP + phosphate + H(+). Its function is as follows. The RuvA-RuvB-RuvC complex processes Holliday junction (HJ) DNA during genetic recombination and DNA repair, while the RuvA-RuvB complex plays an important role in the rescue of blocked DNA replication forks via replication fork reversal (RFR). RuvA specifically binds to HJ cruciform DNA, conferring on it an open structure. The RuvB hexamer acts as an ATP-dependent pump, pulling dsDNA into and through the RuvAB complex. RuvB forms 2 homohexamers on either side of HJ DNA bound by 1 or 2 RuvA tetramers; 4 subunits per hexamer contact DNA at a time. Coordinated motions by a converter formed by DNA-disengaged RuvB subunits stimulates ATP hydrolysis and nucleotide exchange. Immobilization of the converter enables RuvB to convert the ATP-contained energy into a lever motion, pulling 2 nucleotides of DNA out of the RuvA tetramer per ATP hydrolyzed, thus driving DNA branch migration. The RuvB motors rotate together with the DNA substrate, which together with the progressing nucleotide cycle form the mechanistic basis for DNA recombination by continuous HJ branch migration. Branch migration allows RuvC to scan DNA until it finds its consensus sequence, where it cleaves and resolves cruciform DNA. The polypeptide is Holliday junction branch migration complex subunit RuvB (Rhodopirellula baltica (strain DSM 10527 / NCIMB 13988 / SH1)).